We begin with the raw amino-acid sequence, 832 residues long: Cadherin-17 (832 aa).

Residues 1 to 22 form the signal peptide; it reads MILQAHLHSLCLLMLYLATGYG. Residues 23–787 are Extracellular-facing; it reads QEGKFSGPLK…HQTGIPTVGM (765 aa). Cadherin domains are found at residues 30 to 128, 129 to 244, 245 to 340, 341 to 449, 450 to 566, 567 to 667, and 668 to 777; these read PLKP…TFLQ, SKYE…APKP, VEMV…PPTC, PSPV…IPIF, EKSD…APQF, SQHV…PPRL, and AKDY…RPAG. N-linked (GlcNAc...) asparagine glycosylation is found at Asn149, Asn184, Asn250, Asn419, Asn456, Asn546, Asn587, and Asn722. Residues 788–808 form a helical membrane-spanning segment; the sequence is AVGILLTTLLVIGIILAVVFI. Residues 809-832 are Cytoplasmic-facing; it reads RIKKDKGKDNVESAQASEVKPLRS.

In terms of tissue distribution, expressed in the gastrointestinal tract and pancreatic duct. Not detected in kidney, lung, liver, brain, adrenal gland and skin.

It localises to the cell membrane. Cadherins are calcium-dependent cell adhesion proteins. They preferentially interact with themselves in a homophilic manner in connecting cells; cadherins may thus contribute to the sorting of heterogeneous cell types. LI-cadherin may have a role in the morphological organization of liver and intestine. Involved in intestinal peptide transport. This chain is Cadherin-17 (CDH17), found in Homo sapiens (Human).